A 63-amino-acid chain; its full sequence is Omega-conotoxin Eu1.6 (63 aa).

The N-terminal stretch at M1 to S21 is a signal peptide. Positions F22–K47 are excised as a propeptide. Intrachain disulfides connect C49-C55 and C50-C63. The segment at S51–P53 is ser-Xaa-Pro motif, crucial for potent interaction with nAChR.

It belongs to the conotoxin A superfamily. In terms of tissue distribution, expressed by the venom duct.

The protein resides in the secreted. Functionally, this amidated peptide potently and teversibly inhibits Cav2.2/CACNA1B. Steady-state inactivation is enhanced at hyperpolarized membrane potentials. Also shows a weak interaction at alpha-3-beta-4/ CHRNA3-CHRNB4 and alpha-7/CHRNA7 nAChRs subtypes. In vivo, exhibits a potent analgesic activity in rat partial sciatic nerve injury and chronic constriction injury models. The polypeptide is Omega-conotoxin Eu1.6 (Conus eburneus (Ivory cone)).